The chain runs to 252 residues: 3-deoxy-manno-octulosonate cytidylyltransferase (252 aa).

It belongs to the KdsB family.

Its subcellular location is the cytoplasm. It carries out the reaction 3-deoxy-alpha-D-manno-oct-2-ulosonate + CTP = CMP-3-deoxy-beta-D-manno-octulosonate + diphosphate. It participates in nucleotide-sugar biosynthesis; CMP-3-deoxy-D-manno-octulosonate biosynthesis; CMP-3-deoxy-D-manno-octulosonate from 3-deoxy-D-manno-octulosonate and CTP: step 1/1. It functions in the pathway bacterial outer membrane biogenesis; lipopolysaccharide biosynthesis. Activates KDO (a required 8-carbon sugar) for incorporation into bacterial lipopolysaccharide in Gram-negative bacteria. The polypeptide is 3-deoxy-manno-octulosonate cytidylyltransferase (Xylella fastidiosa (strain Temecula1 / ATCC 700964)).